The following is a 417-amino-acid chain: Probable pectate lyase 20 (417 aa).

The N-terminal stretch at 1–25 (MAVTQILVVFASALLLSMFFTGVDS) is a signal peptide. N-linked (GlcNAc...) asparagine glycans are attached at residues Asn-29 and Asn-53. The Ca(2+) site is built by Asp-215, Asp-239, and Asp-243. The active site involves Arg-295.

It belongs to the polysaccharide lyase 1 family. Ca(2+) serves as cofactor.

The enzyme catalyses Eliminative cleavage of (1-&gt;4)-alpha-D-galacturonan to give oligosaccharides with 4-deoxy-alpha-D-galact-4-enuronosyl groups at their non-reducing ends.. It participates in glycan metabolism; pectin degradation; 2-dehydro-3-deoxy-D-gluconate from pectin: step 2/5. In Arabidopsis thaliana (Mouse-ear cress), this protein is Probable pectate lyase 20.